We begin with the raw amino-acid sequence, 327 residues long: Porphobilinogen deaminase (327 aa).

An S-(dipyrrolylmethanemethyl)cysteine modification is found at Cys250.

Belongs to the HMBS family. As to quaternary structure, monomer. Dipyrromethane is required as a cofactor.

The enzyme catalyses 4 porphobilinogen + H2O = hydroxymethylbilane + 4 NH4(+). It participates in porphyrin-containing compound metabolism; protoporphyrin-IX biosynthesis; coproporphyrinogen-III from 5-aminolevulinate: step 2/4. Functionally, tetrapolymerization of the monopyrrole PBG into the hydroxymethylbilane pre-uroporphyrinogen in several discrete steps. This is Porphobilinogen deaminase from Paraburkholderia phymatum (strain DSM 17167 / CIP 108236 / LMG 21445 / STM815) (Burkholderia phymatum).